The chain runs to 433 residues: Steroid hormone receptor ERR2 (433 aa).

The tract at residues 1 to 41 (MSSEDRHLGSSCGSFIKTEPSSPSSGIDALSHHSPSGSSDA) is disordered. Positions 32-41 (HHSPSGSSDA) are enriched in low complexity. The tract at residues 93-211 (YMLNAIPKRL…SPPAKKPLTK (119 aa)) is interaction with NANOG. A DNA-binding region (nuclear receptor) is located at residues 100 to 186 (KRLCLVCGDI…RVRGGRQKYK (87 aa)). 2 NR C4-type zinc fingers span residues 103–123 (CLVCGDIASGYHYGVASCEAC) and 139–163 (CPATNECEITKRRRKSCQACRFMKC). Positions 203–433 (PPAKKPLTKI…LFLEMLEAKV (231 aa)) are essential for ESRRB transcriptional activity and interaction with NCOA3. One can recognise an NR LBD domain in the interval 208–432 (PLTKIVSYLL…KLFLEMLEAK (225 aa)).

This sequence belongs to the nuclear hormone receptor family. NR3 subfamily. In terms of assembly, binds DNA as a monomer. Interacts with NR0B1; represses ESRRB activity at the GATA6 promoter. Interacts with NANOG; reciprocally modulates their transcriptional activities and activates POU5F1 expression. Interacts with NCOA3; mediates the interaction between ESRRB and RNA polymerase II complexes and allows NCOA3 corecruitment to ESRRB, KLF4, NANOG, and SOX2 enhancer regions to trigger ESRRB-dependent gene activation involved in self-renewal and pluripotency. Interacts with KDM1A; co-occupes the core set of ESRRB targets including ELF5 and EOMES. Interacts with the multiprotein complex Integrator, at least composed of INTS1, INTS2, INTS3, INTS4, INTS5, INTS6, INTS7, INTS8, INTS9/RC74, INTS10, INTS11/CPSF3L and INTS12; ESRRB is probably not a core component of the integrator complex and associates to integrator via its interaction with INTS1 and INTS9; attracts the transcriptional machinery. Interacts with JARID2. Interacts with POU5F1; recruits ESRRB near the POU5F1-SOX2 element in the NANOG proximal promoter leading to activation of NANOG expression; the interaction is DNA independent. In terms of processing, acetylated by PCAF/KAT2 (in vitro).

The protein localises to the nucleus. The protein resides in the cytoplasm. It is found in the chromosome. In terms of biological role, transcription factor that binds a canonical ESRRB recognition (ERRE) sequence 5'TCAAGGTCA-3' localized on promoter and enhancer of targets genes regulating their expression or their transcription activity. Plays a role, in a LIF independent manner, in maintainance of self-renewal and pluripotency of embryonic and trophoblast stem cells through different signaling pathways including FGF signaling pathway and Wnt signaling pathways. Involved in morula development (2-16 cells embryos) by acting as a regulator at the 8-cell stage. Upon FGF signaling pathway activation, interacts with KDM1A by directly binding to enhancer site of ELF5 and EOMES and activating their transcription leading to self-renewal of trophoblast stem cells. Also regulates expression of multiple rod-specific genes and is required for survival of this cell type. Plays a role as transcription factor activator of GATA6, NR0B1, POU5F1 and PERM1. Plays a role as transcription factor repressor of NFE2L2 transcriptional activity and ESR1 transcriptional activity. During mitosis remains bound to a subset of interphase target genes, including pluripotency regulators, through the canonical ESRRB recognition (ERRE) sequence, leading to their transcriptional activation in early G1 phase. Can coassemble on structured DNA elements with other transcription factors like SOX2, POU5F1, KDM1A and NCOA3 to trigger ESRRB-dependent gene activation. This mechanism, in the case of SOX2 corecruitment prevents the embryonic stem cells (ESCs) to epiblast stem cells (EpiSC) transition through positive regulation of NR0B1 that inhibits the EpiSC transcriptional program. Also plays a role inner ear development by controlling expression of ion channels and transporters and in early placentation. The chain is Steroid hormone receptor ERR2 from Rattus norvegicus (Rat).